The primary structure comprises 1728 residues: Mitochondrial 3' processome subunit 1 (1728 aa).

The transit peptide at 1–117 (MRRLILSQTL…AGKMTGSSRF (117 aa)) directs the protein to the mitochondrion. Disordered regions lie at residues 45-71 (HRKR…SGDG), 88-156 (ESPV…IGQQ), and 829-863 (GCNR…PKGT).

Component of the mitochondrial 3' processome (MPsome) complex composed at least of terminal uridylyltransferase KRET1/TUT1, 3'-5' exonuclease DSS1, MPSS1, MPSS2 and MPSS3. Within the complex, interacts with KRET1.

The protein localises to the mitochondrion. As part of the mitochondrial 3' processome (MPsome), involved in the maturation of guided RNA (gRNA) precursors. The polypeptide is Mitochondrial 3' processome subunit 1 (Trypanosoma brucei brucei).